Consider the following 369-residue polypeptide: Molybdenum import ATP-binding protein ModC (369 aa).

In terms of domain architecture, ABC transporter spans 7-243 (PGQAGIHARF…LDLPMAMTDD (237 aa)). 41 to 48 (GQSGSGKT) is a binding site for ATP. A Mop domain is found at 304–369 (EGSILNVLAV…AQIKAVSLLA (66 aa)).

Belongs to the ABC transporter superfamily. Molybdate importer (TC 3.A.1.8) family. The complex is composed of two ATP-binding proteins (ModC), two transmembrane proteins (ModB) and a solute-binding protein (ModA).

It localises to the cell inner membrane. The enzyme catalyses molybdate(out) + ATP + H2O = molybdate(in) + ADP + phosphate + H(+). Part of the ABC transporter complex ModABC involved in molybdenum import. Responsible for energy coupling to the transport system. This Bordetella bronchiseptica (strain ATCC BAA-588 / NCTC 13252 / RB50) (Alcaligenes bronchisepticus) protein is Molybdenum import ATP-binding protein ModC.